Consider the following 783-residue polypeptide: MNTKILDQLEFNKVKDQFTEYLQTEQAQAELRDLVPMTNPERIQNQFTEIQEMSEIFVEHHGFAIGSLRDISEPLRRLELDADLNIQELIAIKKVLQASADLSRFYADLENVELIALKRLFEKIEAFPSLQGSLQSINDGGFIEHFASPELQNIRRQLKACDDAIRQTLQDILKKSGHMLAENLIASRNGRSVLPVKNTYRNRIAGVVHDISSSGNTVYIEPRAVIQLNEKITQLRADERHEMARILHELSDQLRPHTAAIANNAWILGHMDFIRGKYLYLHDKKAIIPEISDNQTLQLLNVRHPLLINPVANDLRFDEDLTVIVITGPNTGGKTVMLKTLGLAQLMAQSGLPILADKGSRVAIFQEIFADIGDEQSIEQSLSTFSSHMTHIVEILNTADSNSLVLVDELGAGTDPQEGASLAMAILEHLRLSQIKTMATTHYPELKAYGIETQHVENASMEFDTATLRPTYRFMQGVPGRSNAFEIARRLGLNEIIVKEAENLTDTDSDVNRIIEQLEAQTVETQKRLEHIKDVEQENLKFNRAVKKLYNEFSHEYDKELEKAQKEIQEMVDTALAESDSILKNLHDKSQLKPHEVIDAKGKLKKLAAQVDLSKNKVLRKAKKEKAARAPRVGDDIIVTAYGQRGTLTSQAKNGNWEAQVGLIKMSLKADEFTLVRTQAEAQQPKKKQINVVKKAKKTSSDGPRARLDLRGKRYEEAMQELDAFIDQALLNNMSQVEIIHGIGTGVIRDAVTKYLRRHRHVKNFEYAPQSAGGSGCTIATLG.

Residue 328-335 coordinates ATP; sequence GPNTGGKT. The 76-residue stretch at 708–783 folds into the Smr domain; it reads LDLRGKRYEE…GSGCTIATLG (76 aa).

Belongs to the DNA mismatch repair MutS family. MutS2 subfamily. As to quaternary structure, homodimer. Binds to stalled ribosomes, contacting rRNA.

Its function is as follows. Endonuclease that is involved in the suppression of homologous recombination and thus may have a key role in the control of bacterial genetic diversity. Functionally, acts as a ribosome collision sensor, splitting the ribosome into its 2 subunits. Detects stalled/collided 70S ribosomes which it binds and splits by an ATP-hydrolysis driven conformational change. Acts upstream of the ribosome quality control system (RQC), a ribosome-associated complex that mediates the extraction of incompletely synthesized nascent chains from stalled ribosomes and their subsequent degradation. Probably generates substrates for RQC. The protein is Endonuclease MutS2 of Streptococcus thermophilus (strain ATCC BAA-250 / LMG 18311).